A 110-amino-acid polypeptide reads, in one-letter code: uncharacterized protein (110 aa).

A signal peptide spans 1-26 (MIRNVLLAFMICSGMTLLGGCSSVMS). Positions 87-110 (RVEKSEANAQATNAVIPPARMPDN) are disordered.

To E.coli YceK.

This is an uncharacterized protein from Escherichia coli (strain K12).